Consider the following 326-residue polypeptide: Probable cell division protein WhiA (326 aa).

The segment at residues Ser275–Leu308 is a DNA-binding region (H-T-H motif).

The protein belongs to the WhiA family.

In terms of biological role, involved in cell division and chromosome segregation. The protein is Probable cell division protein WhiA of Arthrobacter sp. (strain FB24).